Consider the following 231-residue polypeptide: Ureidoacrylate amidohydrolase RutB (231 aa).

The active-site Proton acceptor is Asp25. The active site involves Lys134. The active-site Nucleophile is Cys167.

Belongs to the isochorismatase family. RutB subfamily.

The catalysed reaction is (Z)-3-ureidoacrylate + H2O + H(+) = (Z)-3-aminoacrylate + NH4(+) + CO2. The enzyme catalyses (Z)-3-ureidoacrylate + H2O = (Z)-3-aminoacrylate + carbamate + H(+). It carries out the reaction (Z)-2-methylureidoacrylate + H2O + H(+) = (Z)-2-methylaminoacrylate + NH4(+) + CO2. In terms of biological role, hydrolyzes ureidoacrylate to form aminoacrylate and carbamate. The carbamate hydrolyzes spontaneously, thereby releasing one of the nitrogen atoms of the pyrimidine ring as ammonia and one of its carbon atoms as CO2. This is Ureidoacrylate amidohydrolase RutB from Escherichia coli (strain SMS-3-5 / SECEC).